The chain runs to 307 residues: Aspartate carbamoyltransferase catalytic subunit (307 aa).

Residues Arg-59 and Thr-60 each coordinate carbamoyl phosphate. Lys-87 contacts L-aspartate. Positions 109, 137, and 140 each coordinate carbamoyl phosphate. Residues Arg-173 and Arg-223 each coordinate L-aspartate. Carbamoyl phosphate-binding residues include Gly-266 and Pro-267.

Belongs to the aspartate/ornithine carbamoyltransferase superfamily. ATCase family. Heterododecamer (2C3:3R2) of six catalytic PyrB chains organized as two trimers (C3), and six regulatory PyrI chains organized as three dimers (R2).

The enzyme catalyses carbamoyl phosphate + L-aspartate = N-carbamoyl-L-aspartate + phosphate + H(+). It functions in the pathway pyrimidine metabolism; UMP biosynthesis via de novo pathway; (S)-dihydroorotate from bicarbonate: step 2/3. In terms of biological role, catalyzes the condensation of carbamoyl phosphate and aspartate to form carbamoyl aspartate and inorganic phosphate, the committed step in the de novo pyrimidine nucleotide biosynthesis pathway. This Helicobacter pylori (strain HPAG1) protein is Aspartate carbamoyltransferase catalytic subunit.